The chain runs to 467 residues: 3-isopropylmalate dehydratase large subunit (467 aa).

Residues cysteine 347, cysteine 408, and cysteine 411 each coordinate [4Fe-4S] cluster.

This sequence belongs to the aconitase/IPM isomerase family. LeuC type 1 subfamily. In terms of assembly, heterodimer of LeuC and LeuD. The cofactor is [4Fe-4S] cluster.

The enzyme catalyses (2R,3S)-3-isopropylmalate = (2S)-2-isopropylmalate. Its pathway is amino-acid biosynthesis; L-leucine biosynthesis; L-leucine from 3-methyl-2-oxobutanoate: step 2/4. Catalyzes the isomerization between 2-isopropylmalate and 3-isopropylmalate, via the formation of 2-isopropylmaleate. This is 3-isopropylmalate dehydratase large subunit from Bordetella bronchiseptica (strain ATCC BAA-588 / NCTC 13252 / RB50) (Alcaligenes bronchisepticus).